An 827-amino-acid polypeptide reads, in one-letter code: Periplasmic nitrate reductase (827 aa).

Residues 1 to 32 (MTLSRRAFIKQTAAATAASAAGVVLPGVDALA) constitute a signal peptide (tat-type signal). A 4Fe-4S Mo/W bis-MGD-type domain is found at 37–93 (LTWSKAPCRFCGTGCGVSVGVKNGKVVATQGDPQAEVNRGLNCVKGYFLSKIMYGQD). The [4Fe-4S] cluster site is built by C44, C47, C51, and C79. Residues K81, Q148, N173, C177, 241-245 (STFEH), 260-262 (QSD), M371, Q375, N481, 507-508 (SD), K530, D557, and 717-726 (TGRVLEHWHS) contribute to the Mo-bis(molybdopterin guanine dinucleotide) site. Residue W793 participates in substrate binding. Mo-bis(molybdopterin guanine dinucleotide)-binding residues include N801 and K818.

Belongs to the prokaryotic molybdopterin-containing oxidoreductase family. NasA/NapA/NarB subfamily. Component of the periplasmic nitrate reductase NapAB complex composed of NapA and NapB. [4Fe-4S] cluster serves as cofactor. The cofactor is Mo-bis(molybdopterin guanine dinucleotide). Predicted to be exported by the Tat system. The position of the signal peptide cleavage has not been experimentally proven.

It localises to the periplasm. The enzyme catalyses 2 Fe(II)-[cytochrome] + nitrate + 2 H(+) = 2 Fe(III)-[cytochrome] + nitrite + H2O. Catalytic subunit of the periplasmic nitrate reductase complex NapAB. Receives electrons from NapB and catalyzes the reduction of nitrate to nitrite. This Paraburkholderia xenovorans (strain LB400) protein is Periplasmic nitrate reductase.